The primary structure comprises 301 residues: MSEEKSYCGFIAIVGRPNVGKSTLLNTLLGQKISITSRKAQTTRHRIVGIHTEGEYQAIYVDTPGLHMEEKRAINRLMNKAASSSIGDVELIIFVVEGTRWTADDEMVLNKLRDGRAPVILAVNKVDNVQEKADLLPHLQFLASQMNFLDIVPLSAESGMNVDTIAGIVRKHLPEAIHHFPEDYITDRSQRFMASEIIREKLMRFLGAELPYSVTVEIERFQTNERGGYDINGLILVEREGQKKMVIGNKGSKIKTIGIEARKDMQDMFEAPVHLELWVKVKSGWADDERALRSLGYGDDV.

The region spanning 7–175 (YCGFIAIVGR…AGIVRKHLPE (169 aa)) is the Era-type G domain. The G1 stretch occupies residues 15 to 22 (GRPNVGKS). A GTP-binding site is contributed by 15–22 (GRPNVGKS). The segment at 41–45 (QTTRH) is G2. Positions 62-65 (DTPG) are G3. Residues 62–66 (DTPGL) and 124–127 (NKVD) each bind GTP. A G4 region spans residues 124–127 (NKVD). The segment at 154-156 (LSA) is G5. The KH type-2 domain maps to 198 to 283 (IREKLMRFLG…HLELWVKVKS (86 aa)).

This sequence belongs to the TRAFAC class TrmE-Era-EngA-EngB-Septin-like GTPase superfamily. Era GTPase family. As to quaternary structure, monomer.

The protein resides in the cytoplasm. It localises to the cell inner membrane. An essential GTPase that binds both GDP and GTP, with rapid nucleotide exchange. Plays a role in 16S rRNA processing and 30S ribosomal subunit biogenesis and possibly also in cell cycle regulation and energy metabolism. In Enterobacter sp. (strain 638), this protein is GTPase Era.